A 483-amino-acid chain; its full sequence is 23S rRNA (uracil(1939)-C(5))-methyltransferase RlmD (483 aa).

Basic residues predominate over residues Met-1–Arg-11. The disordered stretch occupies residues Met-1–Gly-36. One can recognise a TRAM domain in the interval Glu-29–Glu-90. Residues Cys-103, Cys-109, Cys-112, and Cys-189 each contribute to the [4Fe-4S] cluster site. Residues Gln-298, Phe-332, Asn-337, Glu-353, Asp-379, and Asp-401 each coordinate S-adenosyl-L-methionine. Cys-427 acts as the Nucleophile in catalysis.

This sequence belongs to the class I-like SAM-binding methyltransferase superfamily. RNA M5U methyltransferase family. RlmD subfamily.

The catalysed reaction is uridine(1939) in 23S rRNA + S-adenosyl-L-methionine = 5-methyluridine(1939) in 23S rRNA + S-adenosyl-L-homocysteine + H(+). Its function is as follows. Catalyzes the formation of 5-methyl-uridine at position 1939 (m5U1939) in 23S rRNA. The sequence is that of 23S rRNA (uracil(1939)-C(5))-methyltransferase RlmD from Halomonas elongata (strain ATCC 33173 / DSM 2581 / NBRC 15536 / NCIMB 2198 / 1H9).